Reading from the N-terminus, the 140-residue chain is Protein NrdI (140 aa).

It belongs to the NrdI family.

In terms of biological role, probably involved in ribonucleotide reductase function. The sequence is that of Protein NrdI from Ruegeria sp. (strain TM1040) (Silicibacter sp.).